The sequence spans 216 residues: Thiamine-phosphate synthase (216 aa).

Residues 39 to 43 (QLRRK) and Asn-71 each bind 4-amino-2-methyl-5-(diphosphooxymethyl)pyrimidine. Residues Asp-72 and Asp-91 each coordinate Mg(2+). Ser-109 is a 4-amino-2-methyl-5-(diphosphooxymethyl)pyrimidine binding site. Position 136–138 (136–138 (SPT)) interacts with 2-[(2R,5Z)-2-carboxy-4-methylthiazol-5(2H)-ylidene]ethyl phosphate. A 4-amino-2-methyl-5-(diphosphooxymethyl)pyrimidine-binding site is contributed by Lys-139. Residues Gly-172 and 192-193 (IT) each bind 2-[(2R,5Z)-2-carboxy-4-methylthiazol-5(2H)-ylidene]ethyl phosphate.

It belongs to the thiamine-phosphate synthase family. The cofactor is Mg(2+).

The enzyme catalyses 2-[(2R,5Z)-2-carboxy-4-methylthiazol-5(2H)-ylidene]ethyl phosphate + 4-amino-2-methyl-5-(diphosphooxymethyl)pyrimidine + 2 H(+) = thiamine phosphate + CO2 + diphosphate. It carries out the reaction 2-(2-carboxy-4-methylthiazol-5-yl)ethyl phosphate + 4-amino-2-methyl-5-(diphosphooxymethyl)pyrimidine + 2 H(+) = thiamine phosphate + CO2 + diphosphate. The catalysed reaction is 4-methyl-5-(2-phosphooxyethyl)-thiazole + 4-amino-2-methyl-5-(diphosphooxymethyl)pyrimidine + H(+) = thiamine phosphate + diphosphate. It functions in the pathway cofactor biosynthesis; thiamine diphosphate biosynthesis; thiamine phosphate from 4-amino-2-methyl-5-diphosphomethylpyrimidine and 4-methyl-5-(2-phosphoethyl)-thiazole: step 1/1. Functionally, condenses 4-methyl-5-(beta-hydroxyethyl)thiazole monophosphate (THZ-P) and 2-methyl-4-amino-5-hydroxymethyl pyrimidine pyrophosphate (HMP-PP) to form thiamine monophosphate (TMP). The chain is Thiamine-phosphate synthase from Bordetella avium (strain 197N).